Here is a 551-residue protein sequence, read N- to C-terminus: Probable metalloreductase AIM14 (551 aa).

7 helical membrane passes run 25–45, 67–87, 100–117, 138–155, 172–192, 199–221, and 225–247; these read GIIIFAISVIHILFFLLVKFI, PTWMLITLWILIIFFIGGANI, RYGRIAYCLLPLNIYLIL, KWLSRLISICTLIHAIGY, FLNFLGIVVFVMFAVLIIVSI, YYSLFYIIHNITAWSMVVLIIFH, and GVTIFGIICLILMCYQLLYLRFY. A Ferric oxidoreductase domain is found at 102 to 217; the sequence is GRIAYCLLPL…NITAWSMVVL (116 aa). One can recognise an FAD-binding FR-type domain in the interval 247–369; the sequence is YKSYPVNNLK…GGSGISFGLP (123 aa). A disordered region spans residues 440-492; sequence QDESHAKVEQTQGEEEVDGLLNQDENGIPLQSMKKESFPKKEEGEDEEKSSKD. Positions 472–492 are enriched in basic and acidic residues; it reads MKKESFPKKEEGEDEEKSSKD.

The protein belongs to the ferric reductase (FRE) family. AIM14 subfamily.

The protein localises to the membrane. Probable cell surface metalloreductase. May be involved in iron or copper homeostasis. The protein is Probable metalloreductase AIM14 (AIM14) of Candida tropicalis (strain ATCC MYA-3404 / T1) (Yeast).